The sequence spans 261 residues: Probable membrane transporter protein ORF9 (261 aa).

The next 8 helical transmembrane spans lie at 8 to 28 (LLAFLFVAAFIAGFIDSIAGG), 29 to 49 (GGMITIPAMLIAGIPPLQTLG), 78 to 98 (LPMALMSAAGAVLGALLATIV), 100 to 120 (GDVLKAILPFLLIAIALYFGL), 133 to 151 (VTPFVFTLTLVPLIGFYDG), 152 to 171 (VFGPGTGSFFMLGFVTLAGF), 189 to 209 (VGAFGVFLFFGAVLWKVGLLM), and 231 to 251 (IIKPLLVIVSIALAIRLLADP).

Belongs to the 4-toluene sulfonate uptake permease (TSUP) (TC 2.A.102) family.

It is found in the cell membrane. This is Probable membrane transporter protein ORF9 from Sinorhizobium sp.